The following is a 337-amino-acid chain: Ketol-acid reductoisomerase (NADP(+)) (337 aa).

Residues 1 to 181 form the KARI N-terminal Rossmann domain; that stretch reads MKIYYEHDAD…GAARAGVIAT (181 aa). NADP(+) contacts are provided by residues 24-27, Arg47, Ser50, Ser52, and 82-85; these read FGSQ and DEKQ. Residue His107 is part of the active site. Gly133 serves as a coordination point for NADP(+). The region spanning 182 to 328 is the KARI C-terminal knotted domain; it reads TFKDETETDL…SRLRAMMPFL (147 aa). Mg(2+) is bound by residues Asp190, Glu194, Glu226, and Glu230. Ser251 serves as a coordination point for substrate.

It belongs to the ketol-acid reductoisomerase family. Mg(2+) serves as cofactor.

The catalysed reaction is (2R)-2,3-dihydroxy-3-methylbutanoate + NADP(+) = (2S)-2-acetolactate + NADPH + H(+). The enzyme catalyses (2R,3R)-2,3-dihydroxy-3-methylpentanoate + NADP(+) = (S)-2-ethyl-2-hydroxy-3-oxobutanoate + NADPH + H(+). It functions in the pathway amino-acid biosynthesis; L-isoleucine biosynthesis; L-isoleucine from 2-oxobutanoate: step 2/4. It participates in amino-acid biosynthesis; L-valine biosynthesis; L-valine from pyruvate: step 2/4. Functionally, involved in the biosynthesis of branched-chain amino acids (BCAA). Catalyzes an alkyl-migration followed by a ketol-acid reduction of (S)-2-acetolactate (S2AL) to yield (R)-2,3-dihydroxy-isovalerate. In the isomerase reaction, S2AL is rearranged via a Mg-dependent methyl migration to produce 3-hydroxy-3-methyl-2-ketobutyrate (HMKB). In the reductase reaction, this 2-ketoacid undergoes a metal-dependent reduction by NADPH to yield (R)-2,3-dihydroxy-isovalerate. This Thermus thermophilus (strain ATCC BAA-163 / DSM 7039 / HB27) protein is Ketol-acid reductoisomerase (NADP(+)).